The sequence spans 207 residues: Uridine kinase (207 aa).

13-20 (GASGSGKT) lines the ATP pocket.

The protein belongs to the uridine kinase family.

It localises to the cytoplasm. The catalysed reaction is uridine + ATP = UMP + ADP + H(+). It carries out the reaction cytidine + ATP = CMP + ADP + H(+). The protein operates within pyrimidine metabolism; CTP biosynthesis via salvage pathway; CTP from cytidine: step 1/3. Its pathway is pyrimidine metabolism; UMP biosynthesis via salvage pathway; UMP from uridine: step 1/1. This chain is Uridine kinase, found in Ureaplasma urealyticum serovar 10 (strain ATCC 33699 / Western).